A 254-amino-acid chain; its full sequence is Triosephosphate isomerase (254 aa).

10–12 (NWK) serves as a coordination point for substrate. Residue His99 is the Electrophile of the active site. Residue Glu169 is the Proton acceptor of the active site. Substrate is bound by residues Gly175, Ser215, and 236–237 (GG).

The protein belongs to the triosephosphate isomerase family. As to quaternary structure, homodimer.

Its subcellular location is the cytoplasm. The enzyme catalyses D-glyceraldehyde 3-phosphate = dihydroxyacetone phosphate. It functions in the pathway carbohydrate biosynthesis; gluconeogenesis. The protein operates within carbohydrate degradation; glycolysis; D-glyceraldehyde 3-phosphate from glycerone phosphate: step 1/1. In terms of biological role, involved in the gluconeogenesis. Catalyzes stereospecifically the conversion of dihydroxyacetone phosphate (DHAP) to D-glyceraldehyde-3-phosphate (G3P). The sequence is that of Triosephosphate isomerase from Chlamydia felis (strain Fe/C-56) (Chlamydophila felis).